The chain runs to 90 residues: MNIKPLADRVLILPAPAEEKTIGGIIIPDTAKEKPLKGEVVAVGHGTKDEEMVLKAGDTVLYGKYAGTELEVEGTKYLIMRQSDVLAVLG.

It belongs to the GroES chaperonin family. Heptamer of 7 subunits arranged in a ring. Interacts with the chaperonin GroEL.

It is found in the cytoplasm. Functionally, together with the chaperonin GroEL, plays an essential role in assisting protein folding. The GroEL-GroES system forms a nano-cage that allows encapsulation of the non-native substrate proteins and provides a physical environment optimized to promote and accelerate protein folding. GroES binds to the apical surface of the GroEL ring, thereby capping the opening of the GroEL channel. The polypeptide is Co-chaperonin GroES (Bacteroides fragilis (strain ATCC 25285 / DSM 2151 / CCUG 4856 / JCM 11019 / LMG 10263 / NCTC 9343 / Onslow / VPI 2553 / EN-2)).